The primary structure comprises 647 residues: Zinc finger protein 567 (647 aa).

The KRAB domain occupies 32-77 (MDVMLENYCHLISVGCHMTKPDVILKLERGEEPWTSFKGHTCLEEN). Residues Lys-173, Lys-202, and Lys-217 each participate in a glycyl lysine isopeptide (Lys-Gly) (interchain with G-Cter in SUMO2) cross-link. The C2H2-type 1; degenerate zinc finger occupies 210–232 (FEYNDCEKAFLKRGGPVTHSRTY). 7 C2H2-type zinc fingers span residues 253-275 (HTCT…QGIH), 281-303 (YQCH…QRTH), 309-331 (FVCN…QRTH), 337-359 (YECP…QRTH), 365-387 (YECS…QRIH), 393-415 (YICK…QRTH), and 421-443 (YICN…EKTH). Lys-447 participates in a covalent cross-link: Glycyl lysine isopeptide (Lys-Gly) (interchain with G-Cter in SUMO2). 7 consecutive C2H2-type zinc fingers follow at residues 449–471 (YICN…QRTH), 477–499 (YECP…HRTH), 505–527 (YECN…QRIH), 533–555 (YICN…QKIH), 561–583 (YECP…QRTH), 589–611 (YKCS…QRTH), and 617–639 (YICN…QRTH).

This sequence belongs to the krueppel C2H2-type zinc-finger protein family.

The protein localises to the nucleus. Its function is as follows. May be involved in transcriptional regulation. This chain is Zinc finger protein 567 (ZNF567), found in Bos taurus (Bovine).